Here is a 208-residue protein sequence, read N- to C-terminus: LexA repressor (208 aa).

A DNA-binding region (H-T-H motif) is located at residues 28 to 48 (RAEIARQLGFRSANAAEEHLK). Catalysis depends on for autocatalytic cleavage activity residues S125 and K162.

Belongs to the peptidase S24 family. Homodimer.

It carries out the reaction Hydrolysis of Ala-|-Gly bond in repressor LexA.. Its function is as follows. Represses a number of genes involved in the response to DNA damage (SOS response), including recA and lexA. In the presence of single-stranded DNA, RecA interacts with LexA causing an autocatalytic cleavage which disrupts the DNA-binding part of LexA, leading to derepression of the SOS regulon and eventually DNA repair. The protein is LexA repressor of Alteromonas mediterranea (strain DSM 17117 / CIP 110805 / LMG 28347 / Deep ecotype).